The sequence spans 608 residues: DNA ligase (608 aa).

Position 266 (glutamate 266) interacts with ATP. Lysine 268 functions as the N6-AMP-lysine intermediate in the catalytic mechanism. ATP contacts are provided by arginine 273, arginine 288, glutamate 318, phenylalanine 358, arginine 435, and lysine 441.

This sequence belongs to the ATP-dependent DNA ligase family. The cofactor is Mg(2+). Mn(2+) is required as a cofactor.

The enzyme catalyses ATP + (deoxyribonucleotide)n-3'-hydroxyl + 5'-phospho-(deoxyribonucleotide)m = (deoxyribonucleotide)n+m + AMP + diphosphate.. It carries out the reaction ADP + (deoxyribonucleotide)n-3'-hydroxyl + 5'-phospho-(deoxyribonucleotide)m = (deoxyribonucleotide)n+m + AMP + phosphate.. It catalyses the reaction GTP + (deoxyribonucleotide)n-3'-hydroxyl + 5'-phospho-(deoxyribonucleotide)m = (deoxyribonucleotide)n+m + GMP + diphosphate.. Functionally, DNA ligase that seals nicks in double-stranded DNA during DNA replication, DNA recombination and DNA repair. Can use ATP, ADP and GTP, but not CTP, TTP or NAD(+). The polypeptide is DNA ligase (Hyperthermus butylicus (strain DSM 5456 / JCM 9403 / PLM1-5)).